A 319-amino-acid chain; its full sequence is tRNA (guanine(9)-N(1))-methyltransferase Trmt10A (319 aa).

2 disordered regions span residues 16–87 (LSLN…KRQL) and 275–319 (AKIT…SLDS). Over residues 17–33 (SLNNCPGTTPGTPMSKN) the composition is skewed to polar residues. Residues 35-42 (LKKQRKLA) carry the Nuclear localization signal motif. 3 stretches are compositionally biased toward basic and acidic residues: residues 40-58 (KLAE…EREK), 78-87 (SRKELKKRQL), and 276-302 (KITD…ESDK). A coiled-coil region spans residues 44-67 (FAELRKLRREREREKKKQKRREAK). In terms of domain architecture, SAM-dependent MTase TRM10-type spans 83–274 (KKRQLADGGK…ETIPMRKGAK (192 aa)).

This sequence belongs to the class IV-like SAM-binding methyltransferase superfamily. TRM10 family.

It localises to the nucleus. Its subcellular location is the nucleolus. It is found in the chromosome. It catalyses the reaction guanosine(9) in tRNA + S-adenosyl-L-methionine = N(1)-methylguanosine(9) in tRNA + S-adenosyl-L-homocysteine + H(+). Its function is as follows. S-adenosyl-L-methionine-dependent guanine N(1)-methyltransferase that catalyzes the formation of N(1)-methylguanine at position 9 (m1G9) in tRNAs. Modulates Mettl3-mediated N6-methyladenosine (m6A) methylation of mRNA 5'-UTRs and 3'-UTRs independent of its methyltransferase activity; influences mRNA stability and protein levels, in particular of Hsp70 chaperone proteins and other stress response proteins. Also regulates stability of transcripts encoding proteins involved in signaling processes and proteins involved in neurogenesis and axon guidance pathways. This Drosophila melanogaster (Fruit fly) protein is tRNA (guanine(9)-N(1))-methyltransferase Trmt10A.